The following is a 286-amino-acid chain: Bifunctional protein FolD (286 aa).

Residues 165–167 (GRS) and serine 190 each bind NADP(+).

The protein belongs to the tetrahydrofolate dehydrogenase/cyclohydrolase family. Homodimer.

It carries out the reaction (6R)-5,10-methylene-5,6,7,8-tetrahydrofolate + NADP(+) = (6R)-5,10-methenyltetrahydrofolate + NADPH. It catalyses the reaction (6R)-5,10-methenyltetrahydrofolate + H2O = (6R)-10-formyltetrahydrofolate + H(+). It functions in the pathway one-carbon metabolism; tetrahydrofolate interconversion. Functionally, catalyzes the oxidation of 5,10-methylenetetrahydrofolate to 5,10-methenyltetrahydrofolate and then the hydrolysis of 5,10-methenyltetrahydrofolate to 10-formyltetrahydrofolate. In Staphylococcus epidermidis (strain ATCC 12228 / FDA PCI 1200), this protein is Bifunctional protein FolD.